The following is a 380-amino-acid chain: Apolipoprotein A-IV (380 aa).

The first 20 residues, Met-1 to Ala-20, serve as a signal peptide directing secretion. 13 repeat units span residues Asp-33 to Leu-54, Thr-60 to Val-81, Pro-82 to Arg-103, Pro-115 to Gly-136, Pro-137 to Thr-158, Pro-159 to Ala-180, Pro-181 to Thr-202, Pro-203 to Ala-224, Pro-225 to Lys-246, Lys-247 to Val-268, Pro-269 to Gln-286, Lys-287 to Gly-308, and Pro-309 to Gly-330. Residues Asp-33 to Gly-330 form a 13 X 22 AA approximate tandem repeats region. A disordered region spans residues Lys-361–Gly-380.

It belongs to the apolipoprotein A1/A4/E family. As to quaternary structure, homodimer. In terms of tissue distribution, secreted in plasma.

The protein resides in the secreted. Functionally, may have a role in chylomicrons and VLDL secretion and catabolism. Required for efficient activation of lipoprotein lipase by ApoC-II; potent activator of LCAT. Apoa-IV is a major component of HDL and chylomicrons. This is Apolipoprotein A-IV (APOA4) from Bos taurus (Bovine).